Reading from the N-terminus, the 491-residue chain is Limb region 1 homolog-like protein (491 aa).

Residues 1–20 are Extracellular-facing; it reads METEDVTVREQIFHDRVRET. The chain crosses the membrane as a helical span at residues 21–41; that stretch reads IICVLLFICLYILSHFILTHF. At 42–59 the chain is on the cytoplasmic side; the sequence is KKSAEFVTDDIEDATVNK. The helical transmembrane segment at 60-80 threads the bilayer; it reads IALWLCTFTLSVAVCAVLLLP. Over 81–111 the chain is Extracellular; that stretch reads ISILSNEVLLTFPHSYYMQWLNGSLIRGLWN. The chain crosses the membrane as a helical span at residues 112–132; the sequence is LVFLFSNLSLVFLMPFAYFFT. Residues 133 to 152 lie on the Cytoplasmic side of the membrane; the sequence is ESEGFAGSKKGVMARVYETA. The helical transmembrane segment at 153–173 threads the bilayer; sequence VMLLLLSLLVLGIVWVASALL. The Extracellular segment spans residues 174 to 192; the sequence is HHNTARESLYDLWEYYLPY. A helical transmembrane segment spans residues 193–213; the sequence is LYSGISLFGVLLLLLCTPFGL. Residues 214–292 lie on the Cytoplasmic side of the membrane; the sequence is SRMFSVTGSL…RKRASPWQRN (79 aa). A helical membrane pass occupies residues 293–313; the sequence is LVYPVAMLLLLALTAVSVLMV. Residues 314–346 lie on the Extracellular side of the membrane; the sequence is CFHVLELLFDESAMPRGMEDPHLGLASFSMLGS. A helical transmembrane segment spans residues 347-367; it reads LGAAVQVVIILYLMVSSVVGF. The Cytoplasmic segment spans residues 368-384; it reads YSSPLFTGLLPRAQDTT. Residues 385 to 405 traverse the membrane as a helical segment; sequence LTQIIGNCVSLLILSSALPVF. Over 406–427 the chain is Extracellular; sequence SRTLGITKFDLLGDFGRHDWLG. A helical membrane pass occupies residues 428–448; the sequence is SFHIVFLYNMLFAGLTSACLI. Over 449-491 the chain is Cytoplasmic; it reads NTVTWALQRELIRAFGLHRLPLTVSRSTIPLKLLLANGLSKIH.

The protein belongs to the LIMR family. Dimer. Can also form higher oligomers.

The protein resides in the cell membrane. It is found in the endoplasmic reticulum membrane. In terms of biological role, may play a role in lymphocyte development by negatively regulating the canonical Wnt signaling pathway. May act as a LCN1 receptor. The polypeptide is Limb region 1 homolog-like protein (lmbr1l) (Danio rerio (Zebrafish)).